The primary structure comprises 461 residues: Photosystem II CP43 reaction center protein (461 aa).

Positions 1-2 (ME) are excised as a propeptide. Residue threonine 3 is modified to N-acetylthreonine. The residue at position 3 (threonine 3) is a Phosphothreonine. Transmembrane regions (helical) follow at residues 57–81 (LFEVAHFVPEKPMYEQGLILLPHLA), 122–143 (LLGPETLEESFPFFGYVWKDRN), 166–188 (KALYFGGVYDTWAPGGGDVRKIT), 243–263 (KPFAWARRALVWSGEAYLSYS), and 279–300 (WFNNTAYPSEFYGPTGPEASQA). Glutamate 355 contacts [CaMn4O5] cluster. The chain crosses the membrane as a helical span at residues 435–459 (RARAAAAGFEKGIDRDLEPVLFMTP).

The protein belongs to the PsbB/PsbC family. PsbC subfamily. As to quaternary structure, PSII is composed of 1 copy each of membrane proteins PsbA, PsbB, PsbC, PsbD, PsbE, PsbF, PsbH, PsbI, PsbJ, PsbK, PsbL, PsbM, PsbT, PsbX, PsbY, PsbZ, Psb30/Ycf12, at least 3 peripheral proteins of the oxygen-evolving complex and a large number of cofactors. It forms dimeric complexes. Binds multiple chlorophylls and provides some of the ligands for the Ca-4Mn-5O cluster of the oxygen-evolving complex. It may also provide a ligand for a Cl- that is required for oxygen evolution. PSII binds additional chlorophylls, carotenoids and specific lipids. serves as cofactor.

Its subcellular location is the plastid. It is found in the chloroplast thylakoid membrane. Its function is as follows. One of the components of the core complex of photosystem II (PSII). It binds chlorophyll and helps catalyze the primary light-induced photochemical processes of PSII. PSII is a light-driven water:plastoquinone oxidoreductase, using light energy to abstract electrons from H(2)O, generating O(2) and a proton gradient subsequently used for ATP formation. The protein is Photosystem II CP43 reaction center protein of Nandina domestica (Heavenly bamboo).